A 1261-amino-acid polypeptide reads, in one-letter code: SNF2 domain-containing protein CLASSY 2 (1261 aa).

The tract at residues 458–479 (FQKRTSRSSRSVAPKTEDSDEP) is disordered. Positions 704–904 (DPTSGNIGGC…FNTLCLARPK (201 aa)) constitute a Helicase ATP-binding domain. 717–724 (HSPGAGKT) contributes to the ATP binding site. A DEAH box motif is present at residues 855 to 858 (DEGH). The Helicase C-terminal domain occupies 1067–1232 (FVLNLIFRVV…DPSLWQAEKI (166 aa)).

It belongs to the helicase family. In terms of assembly, interacts with NRPD1 and SHH1.

Its subcellular location is the nucleus. In terms of biological role, probable chromatin remodeling factor. This is SNF2 domain-containing protein CLASSY 2 (CLSY2) from Arabidopsis thaliana (Mouse-ear cress).